We begin with the raw amino-acid sequence, 210 residues long: FMN-dependent NADH:quinone oxidoreductase 8 (210 aa).

FMN contacts are provided by residues Ser-10 and 16-18 (SIS).

Belongs to the azoreductase type 1 family. In terms of assembly, homodimer. The cofactor is FMN.

The catalysed reaction is 2 a quinone + NADH + H(+) = 2 a 1,4-benzosemiquinone + NAD(+). The enzyme catalyses N,N-dimethyl-1,4-phenylenediamine + anthranilate + 2 NAD(+) = 2-(4-dimethylaminophenyl)diazenylbenzoate + 2 NADH + 2 H(+). Functionally, quinone reductase that provides resistance to thiol-specific stress caused by electrophilic quinones. In terms of biological role, also exhibits azoreductase activity. Catalyzes the reductive cleavage of the azo bond in aromatic azo compounds to the corresponding amines. The polypeptide is FMN-dependent NADH:quinone oxidoreductase 8 (Burkholderia lata (strain ATCC 17760 / DSM 23089 / LMG 22485 / NCIMB 9086 / R18194 / 383)).